We begin with the raw amino-acid sequence, 231 residues long: uncharacterized protein (231 aa).

Position 10–34 (10–34) interacts with NADP(+); it reads VVTGAGSGIGEAIATLLHEEGAKVV. Ser140 serves as a coordination point for substrate. Tyr153 functions as the Proton acceptor in the catalytic mechanism.

This sequence belongs to the short-chain dehydrogenases/reductases (SDR) family.

This is an uncharacterized protein from Staphylococcus aureus (strain N315).